A 157-amino-acid chain; its full sequence is ATP synthase subunit b', chloroplastic (157 aa).

Residues 26–43 (LMASQFLLIMLILDITFY) form a helical membrane-spanning segment.

The protein belongs to the ATPase B chain family. As to quaternary structure, F-type ATPases have 2 components, F(1) - the catalytic core - and F(0) - the membrane proton channel. F(1) has five subunits: alpha(3), beta(3), gamma(1), delta(1), epsilon(1). F(0) has four main subunits: a(1), b(1), b'(1) and c(10-14). The alpha and beta chains form an alternating ring which encloses part of the gamma chain. F(1) is attached to F(0) by a central stalk formed by the gamma and epsilon chains, while a peripheral stalk is formed by the delta, b and b' chains.

The protein resides in the plastid. It is found in the chloroplast thylakoid membrane. In terms of biological role, f(1)F(0) ATP synthase produces ATP from ADP in the presence of a proton or sodium gradient. F-type ATPases consist of two structural domains, F(1) containing the extramembraneous catalytic core and F(0) containing the membrane proton channel, linked together by a central stalk and a peripheral stalk. During catalysis, ATP synthesis in the catalytic domain of F(1) is coupled via a rotary mechanism of the central stalk subunits to proton translocation. Its function is as follows. Component of the F(0) channel, it forms part of the peripheral stalk, linking F(1) to F(0). The b'-subunit is a diverged and duplicated form of b found in plants and photosynthetic bacteria. The protein is ATP synthase subunit b', chloroplastic of Cyanidium caldarium (Red alga).